The following is a 298-amino-acid chain: Quinolinate synthase (298 aa).

2 residues coordinate iminosuccinate: His-19 and Ser-36. Cys-81 serves as a coordination point for [4Fe-4S] cluster. Iminosuccinate contacts are provided by residues 107–109 and Ser-124; that span reads YVN. Cys-168 contributes to the [4Fe-4S] cluster binding site. Iminosuccinate-binding positions include 193 to 195 and Thr-210; that span reads HPE. Cys-254 is a binding site for [4Fe-4S] cluster.

Belongs to the quinolinate synthase family. Type 2 subfamily. [4Fe-4S] cluster serves as cofactor.

The protein localises to the cytoplasm. It catalyses the reaction iminosuccinate + dihydroxyacetone phosphate = quinolinate + phosphate + 2 H2O + H(+). It functions in the pathway cofactor biosynthesis; NAD(+) biosynthesis; quinolinate from iminoaspartate: step 1/1. Its activity is regulated as follows. Inhibited by 4,5 dithiohydroxyphthalic acid (DTHPA) analogs, which bind to the catalytic iron site of the [4Fe-4S] cluster. Its function is as follows. Catalyzes the condensation of iminoaspartate with dihydroxyacetone phosphate to form quinolinate. This Thermotoga maritima (strain ATCC 43589 / DSM 3109 / JCM 10099 / NBRC 100826 / MSB8) protein is Quinolinate synthase.